Consider the following 223-residue polypeptide: Phosphoribosylformylglycinamidine synthase subunit PurQ (223 aa).

The 221-residue stretch at 3–223 (FAVLVFPGSN…MVKSWREQHV (221 aa)) folds into the Glutamine amidotransferase type-1 domain. Catalysis depends on cysteine 85, which acts as the Nucleophile. Residues histidine 193 and glutamate 195 contribute to the active site.

As to quaternary structure, part of the FGAM synthase complex composed of 1 PurL, 1 PurQ and 2 PurS subunits.

The protein localises to the cytoplasm. The catalysed reaction is N(2)-formyl-N(1)-(5-phospho-beta-D-ribosyl)glycinamide + L-glutamine + ATP + H2O = 2-formamido-N(1)-(5-O-phospho-beta-D-ribosyl)acetamidine + L-glutamate + ADP + phosphate + H(+). It catalyses the reaction L-glutamine + H2O = L-glutamate + NH4(+). It functions in the pathway purine metabolism; IMP biosynthesis via de novo pathway; 5-amino-1-(5-phospho-D-ribosyl)imidazole from N(2)-formyl-N(1)-(5-phospho-D-ribosyl)glycinamide: step 1/2. Part of the phosphoribosylformylglycinamidine synthase complex involved in the purines biosynthetic pathway. Catalyzes the ATP-dependent conversion of formylglycinamide ribonucleotide (FGAR) and glutamine to yield formylglycinamidine ribonucleotide (FGAM) and glutamate. The FGAM synthase complex is composed of three subunits. PurQ produces an ammonia molecule by converting glutamine to glutamate. PurL transfers the ammonia molecule to FGAR to form FGAM in an ATP-dependent manner. PurS interacts with PurQ and PurL and is thought to assist in the transfer of the ammonia molecule from PurQ to PurL. This Staphylococcus aureus (strain MSSA476) protein is Phosphoribosylformylglycinamidine synthase subunit PurQ.